We begin with the raw amino-acid sequence, 358 residues long: Alanine racemase (358 aa).

Lys35 (proton acceptor; specific for D-alanine) is an active-site residue. An N6-(pyridoxal phosphate)lysine modification is found at Lys35. Residue Arg130 participates in substrate binding. Residue Tyr255 is the Proton acceptor; specific for L-alanine of the active site. Met303 lines the substrate pocket.

This sequence belongs to the alanine racemase family. Pyridoxal 5'-phosphate serves as cofactor.

The enzyme catalyses L-alanine = D-alanine. Its pathway is amino-acid biosynthesis; D-alanine biosynthesis; D-alanine from L-alanine: step 1/1. Catalyzes the interconversion of L-alanine and D-alanine. May also act on other amino acids. This chain is Alanine racemase (alr), found in Shewanella baltica (strain OS223).